The primary structure comprises 610 residues: Putative sensor histidine kinase NtrY-like (610 aa).

Transmembrane regions (helical) follow at residues 18-38 (IGIL…TISI), 49-69 (KVIW…ILLT), 92-112 (IVVA…ISSA), and 292-312 (IIFI…GVIV). The HAMP domain maps to 314 to 368 (AKIVNPIKKLVIATDKVKSGDLTVQVPENEVDKDEIGTLYAAFNRMIKQLSRQQR). Residues 385-596 (KVAHEIKNPL…VIDIRFNLEE (212 aa)) form the Histidine kinase domain. His388 carries the post-translational modification Phosphohistidine; by autocatalysis.

It localises to the cell membrane. It carries out the reaction ATP + protein L-histidine = ADP + protein N-phospho-L-histidine.. Functionally, member of the two-component regulatory system RBE_0470/RBE_0312. The chain is Putative sensor histidine kinase NtrY-like from Rickettsia bellii (strain RML369-C).